The sequence spans 446 residues: MSDRKYFGTDGIRGKVGDSPITPDFVLKLGWAAGKVLARHGSRKIIIGKDTRISGYMLESALEAGLAAAGLSASFTGPMPTPAVAYLTRTFRAEAGIVISASHNPFYDNGIKFFSIDGTKLPDDVEEAIEAEMEKPLTCVESAELGKANRIVDAAGRYIEFCKGTFPSELSLNELKIVVDCANGATYHIAPSVLRELGATVITIGCEPDGMNINEKCGATDVRLLQERVLAEKADVGLAFDGDGDRLMMVDHLGNKVDGDQILYIIAREGLRQGQLKGGAVGTLMSNMGLQLALKELGIPFVRAKVGDRYVLEAMQEKGWRIGAENSGHVILLDKTTTGDGIVAGLQVLTAMVRNHMTLHDLCSGMKLLPQILVNVRFSGDHNPLKSENVEEVTRQVEKELGDRGRVLLRKSGTEPLIRVMVEGDDAESVIAEMANRIADAVKAAG.

The active-site Phosphoserine intermediate is Ser-102. 4 residues coordinate Mg(2+): Ser-102, Asp-241, Asp-243, and Asp-245. Ser-102 carries the post-translational modification Phosphoserine.

This sequence belongs to the phosphohexose mutase family. It depends on Mg(2+) as a cofactor. Activated by phosphorylation.

The catalysed reaction is alpha-D-glucosamine 1-phosphate = D-glucosamine 6-phosphate. Functionally, catalyzes the conversion of glucosamine-6-phosphate to glucosamine-1-phosphate. The protein is Phosphoglucosamine mutase of Yersinia enterocolitica serotype O:8 / biotype 1B (strain NCTC 13174 / 8081).